The primary structure comprises 219 residues: Ras-related protein Rab-3D (219 aa).

Residue alanine 2 is modified to N-acetylalanine. A GDP-binding site is contributed by 29–37 (GNSSVGKTS). Serine 31, serine 32, valine 33, glycine 34, lysine 35, threonine 36, serine 37, proline 49, and serine 53 together coordinate GTP. Residue threonine 36 participates in Mg(2+) binding. The Switch 1 motif lies at 49–58 (PAFVSTVGID). Mg(2+) is bound by residues threonine 54 and aspartate 77. Glycine 80 serves as a coordination point for GTP. The Switch 2 motif lies at 80 to 96 (GQERYRTITTAYYRGAM). Threonine 86 is modified (phosphothreonine; by LRRK2). GTP contacts are provided by asparagine 135, lysine 136, aspartate 138, alanine 166, and lysine 167. GDP is bound by residues 135–138 (NKCD) and 165–167 (SAK). Serine 190 is subject to Phosphoserine. Residues 190 to 219 (SLEPSSSPGSNGKGPALGDTPPPQPSSCSC) form a disordered region. Residues 193–203 (PSSSPGSNGKG) show a composition bias toward low complexity. Residues 209-219 (TPPPQPSSCSC) are compositionally biased toward pro residues. 2 S-geranylgeranyl cysteine lipidation sites follow: cysteine 217 and cysteine 219. Cysteine methyl ester is present on cysteine 219.

It belongs to the small GTPase superfamily. Rab family. Interacts with RIMS1, RIMS2, RPH3A, RPH3AL and RAB3IP. The GTP-bound form interacts with REP15. Interacts with CHM and CHML; phosphorylation at Thr-86 disrupts these interactions. Interacts with MADD (via uDENN domain); the GTP-bound form is preferred for interaction. Mg(2+) serves as cofactor. Phosphorylation of Thr-86 in the switch II region by LRRK2 prevents the association of RAB regulatory proteins, including CHM and CHML. Predominantly expressed in the adipocyte tissue, but is also expressed in several other organs including skin, spleen, heart and lung.

The protein resides in the cell membrane. The enzyme catalyses GTP + H2O = GDP + phosphate + H(+). Regulated by guanine nucleotide exchange factors (GEFs) which promote the exchange of bound GDP for free GTP. Regulated by GTPase activating proteins (GAPs) which increase the GTP hydrolysis activity. Inhibited by GDP dissociation inhibitors (GDIs) which prevent Rab-GDP dissociation. The small GTPases Rab are key regulators of intracellular membrane trafficking, from the formation of transport vesicles to their fusion with membranes. Rabs cycle between an inactive GDP-bound form and an active GTP-bound form that is able to recruit to membranes different sets of downstream effectors directly responsible for vesicle formation, movement, tethering and fusion. RAB3D may be involved in the insulin-induced exocytosis of GLUT4-containing vesicles in adipocytes. The chain is Ras-related protein Rab-3D from Mus musculus (Mouse).